A 143-amino-acid chain; its full sequence is 1,4-dihydroxy-2-naphthoyl-CoA hydrolase (143 aa).

D14 is a catalytic residue.

The protein belongs to the 4-hydroxybenzoyl-CoA thioesterase family. DHNA-CoA hydrolase subfamily.

The enzyme catalyses 1,4-dihydroxy-2-naphthoyl-CoA + H2O = 1,4-dihydroxy-2-naphthoate + CoA + H(+). Its pathway is cofactor biosynthesis; phylloquinone biosynthesis. It functions in the pathway quinol/quinone metabolism; 1,4-dihydroxy-2-naphthoate biosynthesis; 1,4-dihydroxy-2-naphthoate from chorismate: step 7/7. Its function is as follows. Catalyzes the hydrolysis of 1,4-dihydroxy-2-naphthoyl-CoA (DHNA-CoA) to 1,4-dihydroxy-2-naphthoate (DHNA), a reaction involved in phylloquinone (vitamin K1) biosynthesis. The polypeptide is 1,4-dihydroxy-2-naphthoyl-CoA hydrolase (Gloeothece citriformis (strain PCC 7424) (Cyanothece sp. (strain PCC 7424))).